The following is a 309-amino-acid chain: GTP cyclohydrolase MptA (309 aa).

Belongs to the GTP cyclohydrolase IV family. In terms of assembly, homodimer. Fe(2+) is required as a cofactor.

It carries out the reaction GTP + H2O = 7,8-dihydroneopterin 2',3'-cyclic phosphate + formate + diphosphate + H(+). Its pathway is cofactor biosynthesis; 5,6,7,8-tetrahydromethanopterin biosynthesis. Converts GTP to 7,8-dihydro-D-neopterin 2',3'-cyclic phosphate, the first intermediate in the biosynthesis of coenzyme methanopterin. The polypeptide is GTP cyclohydrolase MptA (Methanococcus aeolicus (strain ATCC BAA-1280 / DSM 17508 / OCM 812 / Nankai-3)).